A 547-amino-acid chain; its full sequence is Glucose-6-phosphate isomerase (547 aa).

Residue E354 is the Proton donor of the active site. Active-site residues include H385 and K513.

This sequence belongs to the GPI family.

It localises to the cytoplasm. It carries out the reaction alpha-D-glucose 6-phosphate = beta-D-fructose 6-phosphate. It functions in the pathway carbohydrate biosynthesis; gluconeogenesis. It participates in carbohydrate degradation; glycolysis; D-glyceraldehyde 3-phosphate and glycerone phosphate from D-glucose: step 2/4. Catalyzes the reversible isomerization of glucose-6-phosphate to fructose-6-phosphate. This Erwinia tasmaniensis (strain DSM 17950 / CFBP 7177 / CIP 109463 / NCPPB 4357 / Et1/99) protein is Glucose-6-phosphate isomerase.